Reading from the N-terminus, the 266-residue chain is Tryptophan synthase alpha chain (266 aa).

Residues E50 and D61 each act as proton acceptor in the active site.

The protein belongs to the TrpA family. In terms of assembly, tetramer of two alpha and two beta chains.

It catalyses the reaction (1S,2R)-1-C-(indol-3-yl)glycerol 3-phosphate + L-serine = D-glyceraldehyde 3-phosphate + L-tryptophan + H2O. Its pathway is amino-acid biosynthesis; L-tryptophan biosynthesis; L-tryptophan from chorismate: step 5/5. The alpha subunit is responsible for the aldol cleavage of indoleglycerol phosphate to indole and glyceraldehyde 3-phosphate. The sequence is that of Tryptophan synthase alpha chain from Alkaliphilus metalliredigens (strain QYMF).